The chain runs to 273 residues: Arginine and glutamate-rich protein 1 (273 aa).

2 stretches are compositionally biased toward basic residues: residues 1–29 (MGRS…RSRS) and 37–58 (VRKR…RSRS). Residues 1–74 (MGRSRSRSSS…VSRRERDRER (74 aa)) form a necessary and sufficient for RNA binding region. Residues 1–113 (MGRSRSRSSS…EEKKAEFERQ (113 aa)) form a disordered region. A phosphoserine mark is found at Ser58 and Ser60. Thr61 carries the phosphothreonine modification. Composition is skewed to basic and acidic residues over residues 66–84 (SRRE…RIDI) and 93–113 (SSLD…FERQ). Residues 75-273 (ASSPPDRIDI…KLSFSLKTQD (199 aa)) form a necessary and sufficient for transcriptional regulation region. Residues Ser76 and Ser77 each carry the phosphoserine modification. Positions 172 to 176 (LLEEL) match the LXXLL motif 1; degenerate motif. Residues 201 to 205 (LERIL) carry the LXXLL motif 2; degenerate motif. Over residues 238–253 (MKLEQERQRQQKEEQK) the composition is skewed to basic and acidic residues. The interval 238 to 273 (MKLEQERQRQQKEEQKIILGKGKSRPKLSFSLKTQD) is disordered. Ser266 carries the post-translational modification Phosphoserine.

This sequence belongs to the ARGLU1 family. Interacts with MED1; the interaction is direct. Interacts with PUF60, U2AF2 and JMJD6; may interact with other proteins involved in RNA processing and splicing.

It is found in the nucleus. It localises to the nucleus speckle. The protein localises to the chromosome. Dual function regulator of gene expression; regulator of transcription and modulator of alternative splicing. General coactivator of nuclear receptor-induced gene expression, including genes activated by the glucocorticoid receptor NR3C1. Binds to a subset of pre-mRNAs and to components of the spliceosome machinery to directly modulate basal alternative splicing; involved in simple and complex cassette exon splicing events. Binds its own pre-mRNA and regulates its alternative splicing and degradation; one of the alternatively spliced products is a stable intronic sequence RNA (sisRNA) that binds the protein to regulate its ability to affect splicing. Binding of the sisRNA stimulates phase separation and localization to nuclear speckles, which may contribute to activation of nuclear receptor-induced gene expression. May also indirectly modulate alternative splicing. Regulates transcription of genes involved in heart development, neuronal cell function, protein localization and chromatin localization. Regulates splicing of genes involved in neurogenesis and chromatin organization. Essential for central nervous system development. Required for the estrogen-dependent expression of ESR1 target genes. Can act in cooperation with MED1. This Bos taurus (Bovine) protein is Arginine and glutamate-rich protein 1 (ARGLU1).